The sequence spans 238 residues: Dephospho-CoA kinase (238 aa).

Positions I3–A233 constitute a DPCK domain. G11 to T16 contacts ATP. Disordered stretches follow at residues H110–S129 and L219–G238.

Belongs to the CoaE family.

The protein resides in the cytoplasm. It catalyses the reaction 3'-dephospho-CoA + ATP = ADP + CoA + H(+). Its pathway is cofactor biosynthesis; coenzyme A biosynthesis; CoA from (R)-pantothenate: step 5/5. In terms of biological role, catalyzes the phosphorylation of the 3'-hydroxyl group of dephosphocoenzyme A to form coenzyme A. In Synechococcus sp. (strain JA-2-3B'a(2-13)) (Cyanobacteria bacterium Yellowstone B-Prime), this protein is Dephospho-CoA kinase.